A 113-amino-acid polypeptide reads, in one-letter code: TYRO protein tyrosine kinase-binding protein (113 aa).

The N-terminal stretch at Met1–Ala27 is a signal peptide. Over Gln28 to Pro40 the chain is Extracellular. A helical membrane pass occupies residues Gly41 to Val61. Residue Asp50 coordinates Ca(2+). Residues Tyr62–Lys113 are Cytoplasmic-facing. The interval Ala75–Lys113 is disordered. The ITAM domain occupies Arg80–Gln108. The segment covering Thr87–Lys113 has biased composition (polar residues). Phosphotyrosine is present on residues Tyr91 and Tyr102.

It belongs to the TYROBP family. In terms of assembly, homodimer; disulfide-linked. Homotrimer; disulfide-linked. Homotetramer; disulfide-linked. Homotrimers and homotetramers form when low levels of partner receptors are available and is competitive with assembly with interacting receptors. They may represent alternative oligomerization states or may be intermediates in the receptor assembly process. Binding of a metal cation aids in homooligomerization through coordination of the metal ion by the subunits of the oligomer. Interacts with TREM1. Interacts with TREM2. Interacts with CLECSF5. Interacts with CD300LB and CD300C2. Interacts with CD300E. Interacts (via ITAM domain) with SYK (via SH2 domains); activates SYK mediating neutrophils and macrophages integrin-mediated activation. Interacts with KLRC2. Interacts with CD300H. Interacts with KLRD1. In terms of processing, following ligand binding by associated receptors, tyrosine phosphorylated in the ITAM domain which leads to activation of additional tyrosine kinases and subsequent cell activation.

It is found in the cell membrane. Functionally, adapter protein which non-covalently associates with activating receptors found on the surface of a variety of immune cells to mediate signaling and cell activation following ligand binding by the receptors. TYROBP is tyrosine-phosphorylated in the ITAM domain following ligand binding by the associated receptors which leads to activation of additional tyrosine kinases and subsequent cell activation. Also has an inhibitory role in some cells. Non-covalently associates with activating receptors of the CD300 family to mediate cell activation. Also mediates cell activation through association with activating receptors of the CD200R family. Required for neutrophil activation mediated by integrin. Required for the activation of myeloid cells mediated by the CLEC5A/MDL1 receptor. Associates with natural killer (NK) cell receptors such as the KLRD1/KLRC2 heterodimer to mediate NK cell activation. Associates with TREM1 to mediate activation of neutrophils and monocytes. Associates with TREM2 on monocyte-derived dendritic cells to mediate up-regulation of chemokine receptor CCR7 and dendritic cell maturation and survival. Association with TREM2 mediates cytokine-induced formation of multinucleated giant cells which are formed by the fusion of macrophages. Stabilizes the TREM2 C-terminal fragment (TREM2-CTF) produced by TREM2 ectodomain shedding which suppresses the release of pro-inflammatory cytokines. In microglia, required with TREM2 for phagocytosis of apoptotic neurons. Required with ITGAM/CD11B in microglia to control production of microglial superoxide ions which promote the neuronal apoptosis that occurs during brain development. Promotes pro-inflammatory responses in microglia following nerve injury which accelerates degeneration of injured neurons. Positively regulates the expression of the IRAK3/IRAK-M kinase and IL10 production by liver dendritic cells and inhibits their T cell allosimulatory ability. Negatively regulates B cell proliferation. Required for CSF1-mediated osteoclast cytoskeletal organization. Positively regulates multinucleation during osteoclast development. This Macaca mulatta (Rhesus macaque) protein is TYRO protein tyrosine kinase-binding protein.